A 403-amino-acid polypeptide reads, in one-letter code: Argininosuccinate synthase (403 aa).

ATP contacts are provided by residues 13–21 (AYSGGLDTS) and Ala40. 2 residues coordinate L-citrulline: Tyr92 and Ser97. ATP is bound at residue Gly122. L-aspartate-binding residues include Thr124, Asn128, and Asp129. Asn128 serves as a coordination point for L-citrulline. L-citrulline-binding residues include Arg132, Ser181, Ser190, Glu266, and Tyr278.

Belongs to the argininosuccinate synthase family. Type 1 subfamily. Homotetramer.

The protein localises to the cytoplasm. The catalysed reaction is L-citrulline + L-aspartate + ATP = 2-(N(omega)-L-arginino)succinate + AMP + diphosphate + H(+). Its pathway is amino-acid biosynthesis; L-arginine biosynthesis; L-arginine from L-ornithine and carbamoyl phosphate: step 2/3. The polypeptide is Argininosuccinate synthase (Aliivibrio fischeri (strain ATCC 700601 / ES114) (Vibrio fischeri)).